A 489-amino-acid chain; its full sequence is NADH-quinone oxidoreductase subunit N (489 aa).

The next 14 helical transmembrane spans lie at 15-35 (APLL…VFFI), 44-64 (GYLA…LWGV), 78-98 (FALT…TMSL), 106-126 (IEQG…ILLA), 131-151 (LIVL…LTGF), 166-186 (LVLG…IFGA), 209-229 (LTLL…KVAL), 244-264 (PTPV…AALV), 278-298 (WLPV…LGAV), 306-326 (MLAY…MVAG), 333-353 (AFLF…AVLI), 378-398 (LAVA…MAGF), 412-432 (GLPW…FFYL), and 459-479 (IALA…VFAL).

The protein belongs to the complex I subunit 2 family. NDH-1 is composed of 14 different subunits. Subunits NuoA, H, J, K, L, M, N constitute the membrane sector of the complex.

The protein localises to the cell membrane. It catalyses the reaction a quinone + NADH + 5 H(+)(in) = a quinol + NAD(+) + 4 H(+)(out). In terms of biological role, NDH-1 shuttles electrons from NADH, via FMN and iron-sulfur (Fe-S) centers, to quinones in the respiratory chain. The immediate electron acceptor for the enzyme in this species is believed to be ubiquinone. Couples the redox reaction to proton translocation (for every two electrons transferred, four hydrogen ions are translocated across the cytoplasmic membrane), and thus conserves the redox energy in a proton gradient. This Chloroflexus aggregans (strain MD-66 / DSM 9485) protein is NADH-quinone oxidoreductase subunit N.